Here is a 329-residue protein sequence, read N- to C-terminus: MQFIDQARISVRGGRGGDGIVAFRREKYVPAGGPSGGDGGQGADVVLEADSNLQTLLDFKYKRLFAGIDGRRGGPNRCTGASGPPLVIKVPCGTEVRHLSTGIVLGDLTTHEERLTVAFGGRGGLGNAHYLSNRNRAPEKCTEGRDGEEWPLQLELKLLAEVGIIGLPNAGKSTLISVLSAARPKIADYPFTTLIPNLGVVRRPTGDGTVFADIPGLIAGAAQGAGLGHDFLRHIERTRLLIHLVDGGAEDPLLDLRVVEKELEAYGHGLVERPRILVINKQELIQEEDLDAIVSALTEASGRTPLLVSAAMNRGLDDMLDRVWSELGI.

The Obg domain maps to 1–159 (MQFIDQARIS…WPLQLELKLL (159 aa)). Residues 160-328 (AEVGIIGLPN…MLDRVWSELG (169 aa)) form the OBG-type G domain. Residues 166-173 (GLPNAGKS), 191-195 (FTTLI), 213-216 (DIPG), 280-283 (NKQE), and 309-311 (SAA) each bind ATP. Residues Ser-173 and Thr-193 each contribute to the Mg(2+) site.

Belongs to the TRAFAC class OBG-HflX-like GTPase superfamily. OBG GTPase family. As to quaternary structure, monomer. Mg(2+) is required as a cofactor.

It is found in the cytoplasm. In terms of biological role, an essential GTPase which binds GTP, GDP and possibly (p)ppGpp with moderate affinity, with high nucleotide exchange rates and a fairly low GTP hydrolysis rate. Plays a role in control of the cell cycle, stress response, ribosome biogenesis and in those bacteria that undergo differentiation, in morphogenesis control. This is GTPase Obg from Synechococcus sp. (strain CC9311).